The chain runs to 157 residues: uncharacterized protein (157 aa).

Positions 9 to 154 constitute an N-acetyltransferase domain; it reads LLINYKTLDE…ETNSNAITNE (146 aa).

This is an uncharacterized protein from Bacillus mycoides (strain KBAB4) (Bacillus weihenstephanensis).